The chain runs to 215 residues: MLKKHDLLNLDWTKTNGMIPVIIQDYSSSEVLMHGYMNQDALTKTQEDGLVTFYSRTKNCLWTKGEISGNYLKVIEISTDCDNDTLLILVAAQGKTCHLGNSSCFISNKYNINFLFKLEEIIEERKNKFSDNSYTSSLYKSGTSRIAQKVGEEAIETILAAMNKDQIELINEASDLIYHLVVLLHDQDLNFNLVIDNLKKRREKNLNTNSEKLLK.

Residues 1–114 (MLKKHDLLNL…FISNKYNINF (114 aa)) are phosphoribosyl-AMP cyclohydrolase. The segment at 115-215 (LFKLEEIIEE…LNTNSEKLLK (101 aa)) is phosphoribosyl-ATP pyrophosphohydrolase.

It in the N-terminal section; belongs to the PRA-CH family. This sequence in the C-terminal section; belongs to the PRA-PH family.

The protein resides in the cytoplasm. The enzyme catalyses 1-(5-phospho-beta-D-ribosyl)-ATP + H2O = 1-(5-phospho-beta-D-ribosyl)-5'-AMP + diphosphate + H(+). It carries out the reaction 1-(5-phospho-beta-D-ribosyl)-5'-AMP + H2O = 1-(5-phospho-beta-D-ribosyl)-5-[(5-phospho-beta-D-ribosylamino)methylideneamino]imidazole-4-carboxamide. It functions in the pathway amino-acid biosynthesis; L-histidine biosynthesis; L-histidine from 5-phospho-alpha-D-ribose 1-diphosphate: step 2/9. Its pathway is amino-acid biosynthesis; L-histidine biosynthesis; L-histidine from 5-phospho-alpha-D-ribose 1-diphosphate: step 3/9. This Buchnera aphidicola subsp. Acyrthosiphon pisum (strain APS) (Acyrthosiphon pisum symbiotic bacterium) protein is Histidine biosynthesis bifunctional protein HisIE (hisI).